The following is a 138-amino-acid chain: Large ribosomal subunit protein uL16 (138 aa).

Basic residues predominate over residues 1–18 (MALMPKRVKHRKSQRGRI). The tract at residues 1 to 21 (MALMPKRVKHRKSQRGRIKGN) is disordered.

This sequence belongs to the universal ribosomal protein uL16 family. As to quaternary structure, part of the 50S ribosomal subunit.

In terms of biological role, binds 23S rRNA and is also seen to make contacts with the A and possibly P site tRNAs. The protein is Large ribosomal subunit protein uL16 of Rhodopirellula baltica (strain DSM 10527 / NCIMB 13988 / SH1).